We begin with the raw amino-acid sequence, 227 residues long: Phosphoribosylformylglycinamidine synthase subunit PurQ (227 aa).

One can recognise a Glutamine amidotransferase type-1 domain in the interval 3 to 225 (FAVIVLPGSN…VKNWRETHVT (223 aa)). The active-site Nucleophile is Cys-86. Catalysis depends on residues His-194 and Glu-196.

As to quaternary structure, part of the FGAM synthase complex composed of 1 PurL, 1 PurQ and 2 PurS subunits.

The protein resides in the cytoplasm. It catalyses the reaction N(2)-formyl-N(1)-(5-phospho-beta-D-ribosyl)glycinamide + L-glutamine + ATP + H2O = 2-formamido-N(1)-(5-O-phospho-beta-D-ribosyl)acetamidine + L-glutamate + ADP + phosphate + H(+). It carries out the reaction L-glutamine + H2O = L-glutamate + NH4(+). Its pathway is purine metabolism; IMP biosynthesis via de novo pathway; 5-amino-1-(5-phospho-D-ribosyl)imidazole from N(2)-formyl-N(1)-(5-phospho-D-ribosyl)glycinamide: step 1/2. Functionally, part of the phosphoribosylformylglycinamidine synthase complex involved in the purines biosynthetic pathway. Catalyzes the ATP-dependent conversion of formylglycinamide ribonucleotide (FGAR) and glutamine to yield formylglycinamidine ribonucleotide (FGAM) and glutamate. The FGAM synthase complex is composed of three subunits. PurQ produces an ammonia molecule by converting glutamine to glutamate. PurL transfers the ammonia molecule to FGAR to form FGAM in an ATP-dependent manner. PurS interacts with PurQ and PurL and is thought to assist in the transfer of the ammonia molecule from PurQ to PurL. In Bacillus subtilis (strain 168), this protein is Phosphoribosylformylglycinamidine synthase subunit PurQ.